Reading from the N-terminus, the 406-residue chain is Calsequestrin-2 (406 aa).

The first 19 residues, 1–19 (MKATCWILAGFCLLFCCKA), serve as a signal peptide directing secretion. N-linked (GlcNAc...) asparagine glycosylation is present at Asn-335. The disordered stretch occupies residues 365-406 (VLSGKINTEDDDDDDDDDDDDDDDDDDDDDDDDDDDDDDDDD). The span at 373–406 (EDDDDDDDDDDDDDDDDDDDDDDDDDDDDDDDDD) shows a compositional bias: acidic residues.

The protein belongs to the calsequestrin family. As to expression, skeletal and heart muscle.

The protein localises to the sarcoplasmic reticulum lumen. Calsequestrin is a high-capacity, moderate affinity, calcium-binding protein and thus acts as an internal calcium store in muscle. Calcium ions are bound by clusters of acidic residues at the protein surface, especially at the interface between subunits. Can bind around 60 Ca(2+) ions. Regulates the release of lumenal Ca(2+) via the calcium release channel RYR2; this plays an important role in triggering muscle contraction. Plays a role in excitation-contraction coupling in the heart and in regulating the rate of heart beats. This chain is Calsequestrin-2 (CASQ2), found in Gallus gallus (Chicken).